We begin with the raw amino-acid sequence, 778 residues long: MLLTSTNTLKISSQRKEWEAKDLTGMFHGQVNGRVKIPASDREGPMSSSIKEMLNNVELSVSSYDTAWAAMVPALDSSKQPLFPKYLSWVMENQKSDGSWGLDLNHPLLIKDSLSSTLACVLTLQRWNVGQQLVHKGLDFIGSNIWAATDESQHSPTGFNMIFPSMIECGTNMGLNLPLNPSSIEAMLIKRDLETESACSLKGTSNLAYVAEGLTRLDDWKDVMKYQRSNGSFFNSPSSTAAAFIHLRDEKCFDYLNSLSKRFENAVPTIYPFDIFTRVSILDILEKLGIDRYISKDKERTLDDLHRCWMKGSDEIFLDPTCSAMAFRLLRTNGYAISSDALSKFEEQKHLYNPKDIKCVLELFKASQMAIFQNEPTLDRIYAWTSTYLKEKLLKGVISDKSLREEVDFVLKHPHARLERIENRKFIESYNVDNVSLTKTSYRFCNVDERYLLTFACQDFNICQSMHQKELDDLERWVIERRLSDLKYARQKVKYAYFAIACRLFQPDFLDARISWVQNSVILTVVDDFFEVGGSLEALSNLIELVERWDEHLTVGYKSEEVKILFHAIYDTINDLADKAYRKQGRCVKRHLVDTWLIYLKSVLKEAEWVTNKTVTTMDEYISNGYISAGSGPIIFSSLYFLEVLSEEIVNSEEYKNLYMHTSMICRLLNDRVQAKSDGAQGKQNSVSLQVIHGNGIITEEEAVKEVTRMIEYHRRELLRMVVETEGSIVPKACKDVFWLMSRILHLFYMSDDGYSSPTKMIHAADAIINEPIIVSQK.

The N-terminal 35 residues, 1 to 35 (MLLTSTNTLKISSQRKEWEAKDLTGMFHGQVNGRV), are a transit peptide targeting the chloroplast. Residues aspartate 527, glutamate 531, asparagine 670, aspartate 671, and aspartate 678 each contribute to the Mg(2+) site. The short motif at 527–531 (DDFFE) is the DDXXD motif element.

This sequence belongs to the terpene synthase family. It depends on Mg(2+) as a cofactor.

The protein resides in the plastid. Its subcellular location is the chloroplast. The catalysed reaction is ent-copalyl diphosphate = ent-sandaracopimara-8(14),15-diene + diphosphate. It catalyses the reaction ent-copalyl diphosphate = ent-(12E)-labda-8(17),12,14-triene + diphosphate. It participates in secondary metabolite biosynthesis; terpenoid biosynthesis. Functionally, diterpene cyclase involved in the biosynthesis of labdane-related diterpenoids (LRDs) natural products. Catalyzes the cyclization of ent-CDP into ent-sandaracopimaradiene as a major, and ent-pimaradiene and ent-labdatriene as minor products. In Ricinus communis (Castor bean), this protein is Ent-sandaracopimaradiene synthase KSL3, chloroplastic.